The primary structure comprises 300 residues: Cation-efflux pump FieF (300 aa).

4 helical membrane-spanning segments follow: residues Leu11–Trp31, Leu40–Val60, Leu81–Gly101, and Pro114–Phe134. Residues Asp45 and Asp49 each contribute to the Zn(2+) site. His153 and Asp157 together coordinate Zn(2+). The next 2 membrane-spanning stretches (helical) occupy residues Ser156–Thr176 and Phe182–Val202.

Belongs to the cation diffusion facilitator (CDF) transporter (TC 2.A.4) family. FieF subfamily. As to quaternary structure, homodimer.

The protein localises to the cell inner membrane. The catalysed reaction is Zn(2+)(in) + H(+)(out) = Zn(2+)(out) + H(+)(in). It carries out the reaction Cd(2+)(in) + H(+)(out) = Cd(2+)(out) + H(+)(in). The enzyme catalyses Fe(2+)(in) + H(+)(out) = Fe(2+)(out) + H(+)(in). Functionally, divalent metal cation transporter which exports Zn(2+), Cd(2+) and possibly Fe(2+). May be involved in zinc and iron detoxification by efflux. In Pectobacterium carotovorum subsp. carotovorum (strain PC1), this protein is Cation-efflux pump FieF.